The chain runs to 182 residues: Adenine phosphoribosyltransferase (182 aa).

It belongs to the purine/pyrimidine phosphoribosyltransferase family. Homodimer.

It is found in the cytoplasm. The enzyme catalyses AMP + diphosphate = 5-phospho-alpha-D-ribose 1-diphosphate + adenine. It participates in purine metabolism; AMP biosynthesis via salvage pathway; AMP from adenine: step 1/1. In terms of biological role, catalyzes a salvage reaction resulting in the formation of AMP, that is energically less costly than de novo synthesis. In Streptomyces coelicolor (strain ATCC BAA-471 / A3(2) / M145), this protein is Adenine phosphoribosyltransferase.